A 181-amino-acid chain; its full sequence is Protein GrpE (181 aa).

The segment covering Met1–Thr20 has biased composition (polar residues). Residues Met1–Glu39 form a disordered region. A compositionally biased stretch (low complexity) spans Gln21 to Glu39.

Belongs to the GrpE family. Homodimer.

The protein resides in the cytoplasm. Participates actively in the response to hyperosmotic and heat shock by preventing the aggregation of stress-denatured proteins, in association with DnaK and GrpE. It is the nucleotide exchange factor for DnaK and may function as a thermosensor. Unfolded proteins bind initially to DnaJ; upon interaction with the DnaJ-bound protein, DnaK hydrolyzes its bound ATP, resulting in the formation of a stable complex. GrpE releases ADP from DnaK; ATP binding to DnaK triggers the release of the substrate protein, thus completing the reaction cycle. Several rounds of ATP-dependent interactions between DnaJ, DnaK and GrpE are required for fully efficient folding. The protein is Protein GrpE of Burkholderia multivorans (strain ATCC 17616 / 249).